Reading from the N-terminus, the 509-residue chain is Seipin-3 (509 aa).

The tract at residues 33 to 73 is disordered; sequence YDCLNSSPPANLRRRRLPMDTDSSSSSSTSSLESCEKRSTV. The span at 52–63 shows a compositional bias: low complexity; the sequence is DTDSSSSSSTSS. 2 helical membrane-spanning segments follow: residues 238–258 and 455–475; these read LFCA…AFMI and LFVW…LVFF.

This sequence belongs to the seipin family. As to expression, expressed in seeds, seedlings, leaves, stems and roots. Not detected in flowers.

It localises to the endoplasmic reticulum membrane. Its function is as follows. Involved in lipid metabolism and lipid droplet (LD) morphology, number, and size. Supports the formation of small-sized LDs and modulates triacylglycerol accumulation. Induces probably a reorganization of the endoplasmic reticulum into LD-forming domains. In Arabidopsis thaliana (Mouse-ear cress), this protein is Seipin-3.